The chain runs to 2207 residues: MGAQVSSQKVGAHENSNRAYGGSTINYTTINYYRDSASNAASKQDFAQDPSKFTEPIKDVLIKTAPTLNSPNIEACGYSDRVMQLTLGNSTITTQEAANSVVAYGRWPEYIKDSEANPVDQPTEPDVAACRFYTLDTVTWRKESRGWWWKLPDALKDMGLFGQNMFYHYLGRAGYTVHVQCNASKFHQGALGVFAVPEMCLAGDSTTHMFTKYENANPGEKGGEFKGSFTLDTNATNPARNFCPVDYLFGSGVLAGNAFVYPHQIINLRTNNCATLVLPYVNSLSIDSMTKHNNWGIAILPLAPLDFATESSTEIPITLTIAPMCCEFNGLRNITVPRTQGLPVLNTPGSNQYLTADNYQSPCAIPEFDVTPPIDIPGEVRNMMELAEIDTMIPLNLTNQRKNTMDMYRVELNDAAHSDTPILCLSLSPASDPRLAHTMLGEILNYYTHWAGSLKFTFLFCGSMMATGKLLVSYAPPGAEAPKSRKEAMLGTHVIWDIGLQSSCTMVVPWISNTTYRQTINDSFTEGGYISMFYQTRVVVPLSTPRKMDILGFVSACNDFSVRLLRDTTHISQEAMPQGLGDLIEGVVEGVTRNALTPLTPANNLPDTQSSGPAHSKETPALTAVETGATNPLVPSDTVQTRHVIQKRTRSESTVESFFARGACVAIIEVDNDAPTKRASKLFSVWKITYKDTVQLRRKLEFFTYSRFDMEFTFVVTSNYTDANNGHALNQVYQIMYIPPGAPIPGKWNDYTWQTSSNPSVFYTYGAPPARISVPYVGIANAYSHFYDGFAKVPLAGQASTEGDSLYGAASLNDFGSLAVRVVNDHNPTKLTSKIRVYMKPKHVRVWCPRPPRAVPYYGPGVDYKDGLAPLPGKGLTTYGFGHQNKAVYTAGYKICNYHLATQEDLQNAVNIMWIRDLLVVESKAQGIDSIARCNCHTGVYYCESRRKYYPVSFTGPTFQYMEANEYYPARYQSHMLIGHGFASPGDCGGILRCQHGVIGIITAGGEGLVAFSDIRDLYAYEEEAMEQGVSNYIESLGAAFGSGFTQQIGNKISELTSMVTSTITEKLLKNLIKIISSLVIITRNYEDTTTVLATLALLGCDASPWQWLKKKACDILEIPYIMRQGDSWLKKFTEACNAAKGLEWVSNKISKFIDWLKEKIIPQARDKLEFVTKLKQLEMLENQIATIHQSCPSQEHQEILFNNVRWLSIQSKRFAPLYAVEAKRIQKLEHTINNYVQFKSKHRIEPVCLLVHGSPGTGKSVATNLIARAIAEKENTSTYSLPPDPSHFDGYKQQGVVIMDDLNQNPDGADMKLFCQMVSTVEFIPPMASLEEKGILFTSNYVLASTNSSRITPPTVAHSDALARRFAFDMDIQIMSEYSRDGKLNMAMATEMCKNCHHPANFKRCCPLVCGKAIQLMDKSSRVRYSIDQITTMIINERNRRSSIGNCMEALFQGPLQYKDLKIDIKTTPPPECINDLLQAVDSQEVRDYCEKKGWIVDITSQVQTERNINRAMTILQAVTTFAAVAGVVYVMYKLFAGHQGAYTGLPNKRPNVPTIRTAKVQGPGFDYAVAMAKRNILTATTIKGEFTMLGVHDNVAILPTHASPGETIVIDGKEVEVLDAKALEDQAGTNLEITIVTLKRNEKFRDIRPHIPTQITETNDGVLIVNTSKYPNMYVPVGAVTEQGYLNLSGRQTARTLMYNFPTRAGQCGGVITCTGKVIGMHVGGNGSHGFAAALKRSYFTQSQGEIQWMRPSKEVGYPVINAPSKTKLEPSAFHYVFEGVKEPAVLTKSDPRLKTDFEEAIFSKYVGNKITEVDEYMKEAVDHYAGQLMSLDINTEQMCLEDAMYGTDGLEALDLSTSAGYPYVAMGKKKRDILNKQTRDTKEMQRLLDTYGINLPLVTYVKDELRSKTKVEQGKSRLIEASSLNDSVAMRMAFGNLYAAFHKNPGVVTGSAVGCDPDLFWSKIPVLMEEKLFAFDYTGYDASLSPAWFEALKMVLEKIGFGDRVDYIDYLNHSHHLYKNKTYCVKGGMPSGCSGTSIFNSMINNLIIRTLLLKTYKGIDLDHLKMIAYGDDVIASYPHEVDASLLAQSGKDYGLTMTPADKSATFETVTWENVTFLKRFFRADEKYPFLVHPVMPMKEIHESIRWTKDPRNTQDHVRSLCLLAWHNGEEEYNKFLAKIRSVPIGRALLLPEYSTLYRRWLDSF.

A lipid anchor (N-myristoyl glycine; by host) is attached at G2. Topologically, residues 2 to 1518 (GAQVSSQKVG…NINRAMTILQ (1517 aa)) are cytoplasmic. Residues 579–599 (GLGDLIEGVVEGVTRNALTPL) are amphipathic alpha-helix. Polar residues predominate over residues 597 to 613 (TPLTPANNLPDTQSSGP). Disordered regions lie at residues 597–620 (TPLT…KETP) and 628–647 (GATN…VIQK). Active-site for protease 2A activity residues include H899 and D917. The Zn(2+) site is built by C934 and C936. C988 acts as the For protease 2A activity in catalysis. Positions 994 and 996 each coordinate Zn(2+). Positions 1126-1198 (GDSWLKKFTE…HQSCPSQEHQ (73 aa)) are membrane-binding. The oligomerization stretch occupies residues 1126-1264 (GDSWLKKFTE…SPGTGKSVAT (139 aa)). Residues 1147 to 1151 (SNKIS) are RNA-binding. The SF3 helicase domain maps to 1230–1386 (EHTINNYVQF…SEYSRDGKLN (157 aa)). 1254–1261 (GSPGTGKS) contacts ATP. Zn(2+) is bound by residues C1394, C1397, C1406, and C1411. A C4-type zinc finger spans residues 1394–1411 (CKNCHHPANFKRCCPLVC). The RNA-binding stretch occupies residues 1438–1445 (ERNRRSSI). The oligomerization stretch occupies residues 1449–1454 (MEALFQ). The stretch at 1519–1534 (AVTTFAAVAGVVYVMY) is an intramembrane region. Topologically, residues 1535 to 2207 (KLFAGHQGAY…TLYRRWLDSF (673 aa)) are cytoplasmic. O-(5'-phospho-RNA)-tyrosine is present on Y1544. The 179-residue stretch at 1564 to 1742 (GPGFDYAVAM…FAAALKRSYF (179 aa)) folds into the Peptidase C3 domain. Active-site for protease 3C activity residues include H1603, E1634, and C1710. In terms of domain architecture, RdRp catalytic spans 1973–2088 (EKLFAFDYTG…SYPHEVDASL (116 aa)). Positions 1979 and 2074 each coordinate Mg(2+).

Belongs to the picornaviruses polyprotein family. In terms of assembly, interacts with capsid protein VP1 and capsid protein VP3 to form heterotrimeric protomers. As to quaternary structure, interacts with capsid protein VP0, and capsid protein VP3 to form heterotrimeric protomers. Interacts with human PVR. Five protomers subsequently associate to form pentamers which serve as building blocks for the capsid. Interacts with capsid protein VP2, capsid protein VP3 and capsid protein VP4 following cleavage of capsid protein VP0. Interacts with capsid protein VP1 and capsid protein VP3 in the mature capsid. In terms of assembly, interacts with capsid protein VP0 and capsid protein VP1 to form heterotrimeric protomers. Five protomers subsequently associate to form pentamers which serve as building blocks for the capsid. Interacts with capsid protein VP4 in the mature capsid. Interacts with protein 2C; this interaction may be important for virion morphogenesis. As to quaternary structure, interacts with capsid protein VP1 and capsid protein VP3. Homodimer. In terms of assembly, homohexamer; forms a hexameric ring structure with 6-fold symmetry characteristic of AAA+ ATPases. Interacts (via N-terminus) with host RTN3 (via reticulon domain); this interaction is important for viral replication. Interacts with capsid protein VP3; this interaction may be important for virion morphogenesis. As to quaternary structure, interacts with protein 3CD. Homodimer. Interacts with host GBF1. Interacts (via GOLD domain) with host ACBD3 (via GOLD domain); this interaction allows the formation of a viral protein 3A/ACBD3 heterotetramer with a 2:2 stoichiometry, which will stimulate the recruitment of host PI4KB in order to synthesize PI4P at the viral RNA replication sites. In terms of assembly, interacts with RNA-directed RNA polymerase. As to quaternary structure, interacts with protein 3AB and with RNA-directed RNA polymerase. Interacts with Viral protein genome-linked and with protein 3CD. Requires Mg(2+) as cofactor. In terms of processing, specific enzymatic cleavages in vivo by the viral proteases yield processing intermediates and the mature proteins. Myristoylation is required for the formation of pentamers during virus assembly. Further assembly of 12 pentamers and a molecule of genomic RNA generates the provirion. Post-translationally, during virion maturation, immature virions are rendered infectious following cleavage of VP0 into VP4 and VP2. This maturation seems to be an autocatalytic event triggered by the presence of RNA in the capsid and it is followed by a conformational change infectious virion. In terms of processing, myristoylation is required during RNA encapsidation and formation of the mature virus particle. VPg is uridylylated by the polymerase into VPg-pUpU. This acts as a nucleotide-peptide primer for the genomic RNA replication.

The protein localises to the virion. Its subcellular location is the host cytoplasm. It is found in the host cytoplasmic vesicle membrane. It localises to the host nucleus. The enzyme catalyses a ribonucleoside 5'-triphosphate + H2O = a ribonucleoside 5'-diphosphate + phosphate + H(+). It carries out the reaction Selective cleavage of Tyr-|-Gly bond in the picornavirus polyprotein.. The catalysed reaction is RNA(n) + a ribonucleoside 5'-triphosphate = RNA(n+1) + diphosphate. It catalyses the reaction Selective cleavage of Gln-|-Gly bond in the poliovirus polyprotein. In other picornavirus reactions Glu may be substituted for Gln, and Ser or Thr for Gly.. Its activity is regulated as follows. Replication or transcription is subject to high level of random mutations by the nucleotide analog ribavirin. Functionally, forms an icosahedral capsid of pseudo T=3 symmetry with capsid proteins VP2 and VP3. The capsid is 300 Angstroms in diameter, composed of 60 copies of each capsid protein and enclosing the viral positive strand RNA genome. Capsid protein VP1 mainly forms the vertices of the capsid. Capsid protein VP1 interacts with host cell receptor PVR to provide virion attachment to target host cells. This attachment induces virion internalization predominantly through clathrin- and caveolin-independent endocytosis in Hela cells and through caveolin-mediated endocytosis in brain microvascular endothelial cells. Tyrosine kinases are probably involved in the entry process. Virus binding to PVR induces increased junctional permeability and rearrangement of junctional proteins. Modulation of endothelial tight junctions, as well as cytolytic infection of endothelial cells themselves, may result in loss of endothelial integrity which may help the virus to reach the CNS. After binding to its receptor, the capsid undergoes conformational changes. Capsid protein VP1 N-terminus (that contains an amphipathic alpha-helix) and capsid protein VP4 are externalized. Together, they shape a pore in the host membrane through which viral genome is translocated to host cell cytoplasm. In terms of biological role, forms an icosahedral capsid of pseudo T=3 symmetry with capsid proteins VP2 and VP3. The capsid is 300 Angstroms in diameter, composed of 60 copies of each capsid protein and enclosing the viral positive strand RNA genome. Its function is as follows. Lies on the inner surface of the capsid shell. After binding to the host receptor, the capsid undergoes conformational changes. Capsid protein VP4 is released, Capsid protein VP1 N-terminus is externalized, and together, they shape a pore in the host membrane through which the viral genome is translocated into the host cell cytoplasm. Component of immature procapsids, which is cleaved into capsid proteins VP4 and VP2 after maturation. Allows the capsid to remain inactive before the maturation step. Functionally, cysteine protease that cleaves viral polyprotein and specific host proteins. It is responsible for the autocatalytic cleavage between the P1 and P2 regions, which is the first cleavage occurring in the polyprotein. Also cleaves the host translation initiation factor EIF4G1, in order to shut down the capped cellular mRNA translation. Inhibits the host nucleus-cytoplasm protein and RNA trafficking by cleaving host members of the nuclear pores including NUP98, NUP62 and NUP153. Counteracts stress granule formation probably by antagonizing its assembly or promoting its dissassembly. Cleaves and inhibits host IFIH1/MDA5, thereby inhibiting the type-I IFN production and the establishment of the antiviral state. Cleaves and inhibits host MAVS, thereby inhibiting the type-I IFN production and the establishment of the antiviral state. In terms of biological role, plays an essential role in the virus replication cycle by acting as a viroporin. Creates a pore in the host endoplasmic reticulum and as a consequence releases Ca2+ in the cytoplasm of infected cell. In turn, high levels of cytoplasmic calcium may trigger membrane trafficking and transport of viral ER-associated proteins to viroplasms, sites of viral genome replication. Its function is as follows. Induces and associates with structural rearrangements of intracellular membranes. Displays RNA-binding, nucleotide binding and NTPase activities. May play a role in virion morphogenesis and viral RNA encapsidation by interacting with the capsid protein VP3. Localizes the viral replication complex to the surface of membranous vesicles. Together with protein 3CD binds the Cis-Active RNA Element (CRE) which is involved in RNA synthesis initiation. Acts as a cofactor to stimulate the activity of 3D polymerase, maybe through a nucleid acid chaperone activity. Functionally, localizes the viral replication complex to the surface of membranous vesicles. It inhibits host cell endoplasmic reticulum-to-Golgi apparatus transport and causes the disassembly of the Golgi complex, possibly through GBF1 interaction. This would result in depletion of MHC, trail receptors and IFN receptors at the host cell surface. Plays an essential role in viral RNA replication by recruiting ACBD3 and PI4KB at the viral replication sites, thereby allowing the formation of the rearranged membranous structures where viral replication takes place. In terms of biological role, acts as a primer for viral RNA replication and remains covalently bound to viral genomic RNA. VPg is uridylylated prior to priming replication into VPg-pUpU. The oriI viral genomic sequence may act as a template for this. The VPg-pUpU is then used as primer on the genomic RNA poly(A) by the RNA-dependent RNA polymerase to replicate the viral genome. During genome replication, the VPg-RNA linkage is removed by the host TDP2, thereby accelerating replication. During the late stage of the replication cycle, host TDP2 is excluded from sites of viral RNA synthesis and encapsidation, allowing for the generation of progeny virions. Its function is as follows. Involved in the viral replication complex and viral polypeptide maturation. It exhibits protease activity with a specificity and catalytic efficiency that is different from protease 3C. Protein 3CD lacks polymerase activity. Protein 3CD binds to the 5'UTR of the viral genome. Major viral protease that mediates proteolytic processing of the polyprotein. Cleaves host EIF5B, contributing to host translation shutoff. Also cleaves host PABPC1, contributing to host translation shutoff. Cleaves host RIGI and thus contributes to the inhibition of type I interferon production. Cleaves host NLRP1, triggers host N-glycine-mediated degradation of the autoinhibitory NLRP1 N-terminal fragment. Inhibits the integrated stress response (ISR) in the infected cell by cleaving host G3BP1. Stress granule formation is thus inhibited, which allows protein synthesis and viral replication. Functionally, replicates the viral genomic RNA on the surface of intracellular membranes. May form linear arrays of subunits that propagate along a strong head-to-tail interaction called interface-I. Covalently attaches UMP to a tyrosine of VPg, which is used to prime RNA synthesis. The positive stranded RNA genome is first replicated at virus induced membranous vesicles, creating a dsRNA genomic replication form. This dsRNA is then used as template to synthesize positive stranded RNA genomes. ss(+)RNA genomes are either translated, replicated or encapsidated. The sequence is that of Genome polyprotein from Homo sapiens (Human).